We begin with the raw amino-acid sequence, 156 residues long: UPF0178 protein Jann_2168 (156 aa).

This sequence belongs to the UPF0178 family.

The sequence is that of UPF0178 protein Jann_2168 from Jannaschia sp. (strain CCS1).